A 134-amino-acid polypeptide reads, in one-letter code: UPF0412 protein YaaI (134 aa).

The N-terminal stretch at 1–23 (MKSVFTISASLAISLMLCCTAQA) is a signal peptide.

This sequence belongs to the UPF0412 family.

The chain is UPF0412 protein YaaI from Escherichia coli O157:H7.